A 902-amino-acid polypeptide reads, in one-letter code: AP-4 complex accessory subunit RUSC1 (902 aa).

4 disordered regions span residues 31 to 67 (ELQE…SNSP), 81 to 155 (LENR…PGTC), 189 to 227 (QDVP…KTEP), and 247 to 450 (KTTE…AQAG). Low complexity predominate over residues 94–112 (AASPSDPGCSSSLSSCSDL). Low complexity predominate over residues 249–261 (TENNNTGWKNNGN). Residues 277–289 (WKTNTRITDSGSK) are compositionally biased toward polar residues. Over residues 291 to 309 (DAGKIDGGWRSDVSEEPVP) the composition is skewed to basic and acidic residues. Pro residues-rich tracts occupy residues 381–390 (PAPPVPPRDP) and 398–407 (PPRPPPPPVP). Residues 433–450 (PAAGEEAPAAKEPGAQAG) are compositionally biased toward low complexity. The interaction with TRAF6 stretch occupies residues 470 to 605 (MAEAQSGTGQ…FHAFILGLLN (136 aa)). An RUN domain is found at 522 to 666 (DVGHLVLTTL…LTFHLDLLFE (145 aa)). An interaction with IKBKG region spans residues 606–672 (TKQLELWFSS…LLFEHHHHLP (67 aa)). Disordered regions lie at residues 706-729 (LRGT…PGSW) and 747-776 (GFPL…TDEM). In terms of domain architecture, SH3 spans 844 to 902 (QTHRAVRALCDHTAARPDQLSFRRGEVLRVITTVDEDWLRCGRDGMEGLVPVGYTSLVL).

As to quaternary structure, associated component of the adapter-like complex 4 (AP-4). Interacts with IKBKG and TRAF6. Interacts with F-actin, acetylated actin, TUBB3, STX1A, KIF5B and KLC1. Phosphorylated on serine residues following nuclear translocation. In terms of processing, polyubiquitinated; polyubiquitination involves TRAF6. Predominantly expressed in brain.

The protein resides in the cytoplasm. It localises to the nucleus. It is found in the cytoskeleton. Its subcellular location is the cytoplasmic vesicle. The protein localises to the early endosome. The protein resides in the postsynaptic density. It localises to the golgi apparatus. In terms of biological role, associates with the adapter-like complex 4 (AP-4) and may therefore play a role in vesicular trafficking of proteins at the trans-Golgi network. Signaling adapter which plays a role in neuronal differentiation. Involved in regulation of NGF-dependent neurite outgrowth. May play a role in neuronal vesicular trafficking, specifically involving pre-synaptic membrane proteins. Seems to be involved in signaling pathways that are regulated by the prolonged activation of MAPK. Can regulate the polyubiquitination of IKBKG and thus may be involved in regulation of the NF-kappa-B pathway. In Homo sapiens (Human), this protein is AP-4 complex accessory subunit RUSC1.